A 289-amino-acid polypeptide reads, in one-letter code: Protoheme IX farnesyltransferase 2 (289 aa).

Helical transmembrane passes span 4-24 (PGII…AAKG), 28-48 (LVLM…GCAI), 66-86 (RVTV…LALG), 99-118 (ALAL…VYSL), 124-144 (SVYG…VGYC), 155-175 (AILL…IAIF), 199-219 (LHIV…PLAG), 221-241 (TGIA…AMAL), and 256-276 (QVFG…ALDF).

It belongs to the UbiA prenyltransferase family. Protoheme IX farnesyltransferase subfamily.

The protein localises to the cell inner membrane. It catalyses the reaction heme b + (2E,6E)-farnesyl diphosphate + H2O = Fe(II)-heme o + diphosphate. Its pathway is porphyrin-containing compound metabolism; heme O biosynthesis; heme O from protoheme: step 1/1. Its function is as follows. Converts heme B (protoheme IX) to heme O by substitution of the vinyl group on carbon 2 of heme B porphyrin ring with a hydroxyethyl farnesyl side group. This is Protoheme IX farnesyltransferase 2 from Shewanella baltica (strain OS195).